The sequence spans 364 residues: sn-glycerol-3-phosphate import ATP-binding protein UgpC (364 aa).

Positions 4–235 (VVLRNVRKTY…PATTFVASFI (232 aa)) constitute an ABC transporter domain. 37-44 (GPSGCGKS) contributes to the ATP binding site.

It belongs to the ABC transporter superfamily. sn-glycerol-3-phosphate importer (TC 3.A.1.1.3) family. As to quaternary structure, the complex is composed of two ATP-binding proteins (UgpC), two transmembrane proteins (UgpA and UgpE) and a solute-binding protein (UgpB).

The protein resides in the cell inner membrane. The catalysed reaction is sn-glycerol 3-phosphate(out) + ATP + H2O = sn-glycerol 3-phosphate(in) + ADP + phosphate + H(+). Part of the ABC transporter complex UgpBAEC involved in sn-glycerol-3-phosphate (G3P) import. Responsible for energy coupling to the transport system. The polypeptide is sn-glycerol-3-phosphate import ATP-binding protein UgpC (Rhodopseudomonas palustris (strain BisB5)).